A 757-amino-acid polypeptide reads, in one-letter code: RNA-directed RNA polymerase catalytic subunit (757 aa).

A disordered region spans residues 50–82; sequence SEKGKWTTNTETGAPQLNPIDGPLPEDNEPSGY. Residues 55-64 are compositionally biased toward polar residues; the sequence is WTTNTETGAP. Short sequence motifs (nuclear localization signal) lie at residues 187–195 and 203–216; these read RKRRVRDNM and RTIGKKKQRVNKRS. The tract at residues 249–256 is promoter-binding site; that stretch reads RGFVYFVE. One can recognise a RdRp catalytic domain in the interval 286-483; the sequence is VRKMMTNSQD…GINMSKKKSY (198 aa).

The protein belongs to the influenza viruses polymerase PB1 family. Influenza RNA polymerase is composed of three subunits: PB1, PB2 and PA. Interacts (via N-terminus) with PA (via C-terminus). Interacts (via C-terminus) with PB2 (via N-terminus); this interaction is essential for transcription initiation. Phosphorylated by host PRKCA.

The protein resides in the host nucleus. It is found in the host cytoplasm. It carries out the reaction RNA(n) + a ribonucleoside 5'-triphosphate = RNA(n+1) + diphosphate. Its function is as follows. RNA-dependent RNA polymerase which is responsible for replication and transcription of virus RNA segments. The transcription of viral mRNAs occurs by a unique mechanism called cap-snatching. 5' methylated caps of cellular mRNAs are cleaved after 10-13 nucleotides by PA. In turn, these short capped RNAs are used as primers by PB1 for transcription of viral mRNAs. During virus replication, PB1 initiates RNA synthesis and copy vRNA into complementary RNA (cRNA) which in turn serves as a template for the production of more vRNAs. The chain is RNA-directed RNA polymerase catalytic subunit from Aves (whales).